A 437-amino-acid chain; its full sequence is Sulfite reductase, dissimilatory-type subunit alpha (437 aa).

The [4Fe-4S] cluster site is built by Cys-177, Cys-183, Cys-221, Cys-225, Cys-284, Cys-303, Cys-306, and Cys-309. The region spanning 294–322 (SKLSIDNKECVRCMHCINTMPRALHIGDE) is the 4Fe-4S ferredoxin-type domain.

Heterohexamer of two alpha, two beta and two gamma subunits.

Part of the complex that catalyzes the reduction of sulfite to sulfide. The alpha and beta subunits may have arisen by gene duplication. They both bind 2 iron-sulfur clusters, but the alpha subunit seems to be catalytically inactive, due to substitutions along the putative substrate access channel, and because it binds sirohydrochlorin (the dematallated form of siroheme) instead of siroheme. This Nitratidesulfovibrio vulgaris (strain ATCC 29579 / DSM 644 / CCUG 34227 / NCIMB 8303 / VKM B-1760 / Hildenborough) (Desulfovibrio vulgaris) protein is Sulfite reductase, dissimilatory-type subunit alpha (dsvA).